Reading from the N-terminus, the 118-residue chain is Ribonuclease P protein component (118 aa).

Belongs to the RnpA family. In terms of assembly, consists of a catalytic RNA component (M1 or rnpB) and a protein subunit.

It carries out the reaction Endonucleolytic cleavage of RNA, removing 5'-extranucleotides from tRNA precursor.. Functionally, RNaseP catalyzes the removal of the 5'-leader sequence from pre-tRNA to produce the mature 5'-terminus. It can also cleave other RNA substrates such as 4.5S RNA. The protein component plays an auxiliary but essential role in vivo by binding to the 5'-leader sequence and broadening the substrate specificity of the ribozyme. The chain is Ribonuclease P protein component from Rickettsia conorii (strain ATCC VR-613 / Malish 7).